The sequence spans 281 residues: Bifunctional protein FolD (281 aa).

Residues 165-167, Thr-192, and Val-233 each bind NADP(+); that span reads GRG.

The protein belongs to the tetrahydrofolate dehydrogenase/cyclohydrolase family. In terms of assembly, homodimer.

The catalysed reaction is (6R)-5,10-methylene-5,6,7,8-tetrahydrofolate + NADP(+) = (6R)-5,10-methenyltetrahydrofolate + NADPH. It carries out the reaction (6R)-5,10-methenyltetrahydrofolate + H2O = (6R)-10-formyltetrahydrofolate + H(+). The protein operates within one-carbon metabolism; tetrahydrofolate interconversion. Its function is as follows. Catalyzes the oxidation of 5,10-methylenetetrahydrofolate to 5,10-methenyltetrahydrofolate and then the hydrolysis of 5,10-methenyltetrahydrofolate to 10-formyltetrahydrofolate. This chain is Bifunctional protein FolD, found in Mycobacterium avium (strain 104).